Reading from the N-terminus, the 888-residue chain is Autotaxin (888 aa).

The N-terminal stretch at 1–27 is a signal peptide; sequence MARRRSCQLHQVISLFTFAVGVNICLG. A propeptide spans 28–35 (removed by furin); that stretch reads VTANRIKR. The N-linked (GlcNAc...) asparagine glycan is linked to N54. 2 consecutive SMB domains span residues 55–98 and 99–143; these read ISGS…LKTA and GGWE…GESH. 10 disulfide bridges follow: C59/C76, C63/C94, C74/C87, C80/C86, C103/C120, C108/C138, C118/C131, C124/C130, C149/C195, and C157/C351. The short motif at 127-129 is the Cell attachment site element; it reads RGD. The segment at 145 to 502 is phosphodiesterase; that stretch reads VDDDCEEIKT…PTFKYKTKVP (358 aa). Zn(2+)-binding residues include D172 and T210. The Nucleophile role is filled by T210. 1-(9Z-octadecenoyl)-sn-glycero-3-phosphate-binding residues include T210, N231, and D312. Residues T210, N231, and D312 each contribute to the 1-hexadecanoyl-sn-glycero-3-phosphate site. Positions 210, 231, and 312 each coordinate 1-tetradecanoyl-sn-glycerol 3-phosphate. Zn(2+) is bound by residues D312, H316, D359, and H360. 5 cysteine pairs are disulfide-bonded: C367–C469, C414–C831, C567–C692, C569–C677, and C800–C810. N-linked (GlcNAc...) asparagine glycosylation is present at N411. H475 contacts Zn(2+). H475 is a 1-(9Z-octadecenoyl)-sn-glycero-3-phosphate binding site. Position 475 (H475) interacts with 1-hexadecanoyl-sn-glycero-3-phosphate. A 1-tetradecanoyl-sn-glycerol 3-phosphate-binding site is contributed by H475. N525 carries N-linked (GlcNAc...) asparagine glycosylation. A nuclease-like domain region spans residues 623–888; sequence LYGRPAVLYR…TYLQTYESEI (266 aa). 5 residues coordinate Ca(2+): D765, D767, D769, L771, and D773. N832 is a glycosylation site (N-linked (GlcNAc...) asparagine). Residues 855–876 form a required for secretion region; the sequence is IEHLTSLDFFRKTSRSYPEILT.

The protein belongs to the nucleotide pyrophosphatase/phosphodiesterase family. Zn(2+) serves as cofactor. It depends on Ca(2+) as a cofactor. In terms of processing, N-glycosylation, but not furin-cleavage, plays a critical role on secretion and on lysoPLD activity. Post-translationally, the interdomain disulfide bond between Cys-414 and Cys-831 is essential for catalytic activity. Detected in fetal serum (at protein level).

The protein resides in the secreted. It catalyses the reaction a 1-O-alkyl-sn-glycero-3-phosphoethanolamine + H2O = a 1-O-alkyl-sn-glycero-3-phosphate + ethanolamine + H(+). It carries out the reaction a 1-acyl-sn-glycero-3-phosphoethanolamine + H2O = a 1-acyl-sn-glycero-3-phosphate + ethanolamine + H(+). The catalysed reaction is 1-(9Z-octadecenoyl)-sn-glycero-3-phosphoethanolamine + H2O = 1-(9Z-octadecenoyl)-sn-glycero-3-phosphate + ethanolamine + H(+). The enzyme catalyses a 1-O-alkyl-sn-glycero-3-phosphocholine + H2O = a 1-O-alkyl-sn-glycero-3-phosphate + choline + H(+). It catalyses the reaction 1-O-(9Z-octadecenyl)-sn-glycero-3-phosphocholine + H2O = 1-O-(9Z-octadecenyl)-sn-glycero-3-phosphate + choline + H(+). It carries out the reaction 1-O-hexadecyl-sn-glycero-3-phosphocholine + H2O = 1-O-hexadecyl-sn-glycero-3-phosphate + choline + H(+). The catalysed reaction is a 1-O-(1Z-alkenyl)-sn-glycero-3-phosphocholine + H2O = a 1-O-(1Z-alkenyl)-sn-glycero-3-phosphate + choline + H(+). The enzyme catalyses a 1-acyl-sn-glycero-3-phosphocholine + H2O = a 1-acyl-sn-glycero-3-phosphate + choline + H(+). It catalyses the reaction 1-dodecanoyl-sn-glycero-3-phosphocholine + H2O = 1-dodecanoyl-sn-glycerol 3-phosphate + choline + H(+). It carries out the reaction 1-(9Z-octadecenoyl)-sn-glycero-3-phosphocholine + H2O = 1-(9Z-octadecenoyl)-sn-glycero-3-phosphate + choline + H(+). The catalysed reaction is 1-tetradecanoyl-sn-glycero-3-phosphocholine + H2O = 1-tetradecanoyl-sn-glycerol 3-phosphate + choline + H(+). The enzyme catalyses 1-decanoyl-sn-glycero-3-phosphocholine + H2O = 1-decanoyl-sn-glycero-3-phosphate + choline + H(+). It catalyses the reaction 1-octadecanoyl-sn-glycero-3-phosphocholine + H2O = 1-octadecanoyl-sn-glycero-3-phosphate + choline + H(+). It carries out the reaction 1-hexadecanoyl-sn-glycero-3-phosphocholine + H2O = 1-hexadecanoyl-sn-glycero-3-phosphate + choline + H(+). The catalysed reaction is 1-hexanoyl-sn-glycero-3-phosphocholine + H2O = 1-hexanoyl-sn-glycero-3-phosphate + choline + H(+). The enzyme catalyses 1-(9Z,12Z)-octadecadienoyl-sn-glycero-3-phosphocholine + H2O = 1-(9Z,12Z)-octadecadienoyl-sn-glycero-3-phosphate + choline + H(+). It catalyses the reaction sphing-4-enine-phosphocholine + H2O = sphing-4-enine 1-phosphate + choline + H(+). It carries out the reaction 1-(5Z,8Z,11Z,14Z-eicosatetraenoyl)-sn-glycero-3-phosphocholine + H2O = 1-(5Z,8Z,11Z,14Z-eicosatetraenoyl)-sn-glycero-3-phosphate + choline + H(+). The catalysed reaction is a 2-acyl-sn-glycero-3-phosphocholine + H2O = a 2-acyl-sn-glycerol 3-phosphate + choline + H(+). The enzyme catalyses a 1,2-diacyl-sn-glycero-3-phosphocholine + H2O = a 1,2-diacyl-sn-glycero-3-phosphate + choline + H(+). It catalyses the reaction 1,2-dioctanoyl-sn-glycero-3-phosphocholine + H2O = 1,2-dioctanoyl-sn-glycero-3-phosphate + choline + H(+). It carries out the reaction 1,2-didecanoyl-sn-glycero-3-phosphocholine + H2O = 1,2-didecanoyl-sn-glycero-3-phosphate + choline + H(+). The catalysed reaction is a 1-acyl-sn-glycero-3-phospho-L-serine + H2O = a 1-acyl-sn-glycero-3-phosphate + L-serine + H(+). The enzyme catalyses 1-(9Z-octadecenoyl)-sn-glycero-3-phospho-L-serine + H2O = 1-(9Z-octadecenoyl)-sn-glycero-3-phosphate + L-serine + H(+). It catalyses the reaction a 2-acyl-sn-glycero-3-phospho-L-serine + H2O = a 2-acyl-sn-glycerol 3-phosphate + L-serine + H(+). Functionally, secreted lysophospholipase D that hydrolyzes lysophospholipids to produce the signaling molecule lysophosphatidic acid (LPA) in extracellular fluids. Its major substrate is lysophosphatidylcholine. Can also act on sphingosylphosphorylcholine producing sphingosine-1-phosphate, a modulator of cell motility. Can hydrolyze, in vitro, bis-pNPP, to some extent pNP-TMP, and barely ATP. Involved in several motility-related processes such as angiogenesis and neurite outgrowth. Acts as an angiogenic factor by stimulating migration of smooth muscle cells and microtubule formation. Stimulates migration of melanoma cells, probably via a pertussis toxin-sensitive G protein. May have a role in induction of parturition. Possible involvement in cell proliferation and adipose tissue development. Required for LPA production in activated platelets, cleaves the sn-1 lysophospholipids to generate sn-1 lysophosphatidic acids containing predominantly 18:2 and 20:4 fatty acids. Shows a preference for the sn-1 to the sn-2 isomer of 1-O-alkyl-sn-glycero-3-phosphocholine (lyso-PAF). This is Autotaxin from Bos taurus (Bovine).